A 251-amino-acid chain; its full sequence is Blue-light absorbing proteorhodopsin (251 aa).

Residues 1-18 (MGKLLLILGSAIALPSFA) form the signal peptide. The next 7 helical transmembrane spans lie at 30 to 50 (VGVSFWLVTAGMLAATVFFFV), 65 to 85 (VSGLITGIAFWHYLYMRGVWI), 97 to 117 (IDWLLTVPLQVVEFYLILAAC), 120 to 140 (VAASLFKKLLAGSLVMLGAGF), 144 to 164 (AGLAPVLPAFIIGMAGWLYMI), 190 to 210 (MMMIIVVGWAIYPAGYAAGYL), and 223 to 243 (LIYNLADFVNKILFGLIIWNV). An N6-(retinylidene)lysine modification is found at K233.

It belongs to the archaeal/bacterial/fungal opsin family. In terms of processing, contains one covalently linked retinal chromophore.

The protein resides in the cell membrane. In terms of biological role, light-driven proton pump. May have a regulatory rather than energy harvesting function, based on light-induced opening of proton channels, to modulate cell physiology depending on light intensity variations. Could be, therefore, a sensory rhodopsin, potentially associated with a transducer component. The sequence is that of Blue-light absorbing proteorhodopsin from Gamma-proteobacterium Hot 75m4.